Here is a 289-residue protein sequence, read N- to C-terminus: Probable acetolactate synthase small subunit (289 aa).

The residue at position 34 (Ser34) is a Phosphoserine. The region spanning 72–149 is the ACT domain; that stretch reads VFNCLVQNEP…AVLDYTGTSM (78 aa).

Belongs to the acetolactate synthase small subunit family.

It is found in the cytoplasm. The protein operates within amino-acid biosynthesis; L-isoleucine biosynthesis; L-isoleucine from 2-oxobutanoate: step 1/4. It functions in the pathway amino-acid biosynthesis; L-valine biosynthesis; L-valine from pyruvate: step 1/4. Stimulates activity of the acetolactate synthase catalytic subunit ilv1. This Schizosaccharomyces pombe (strain 972 / ATCC 24843) (Fission yeast) protein is Probable acetolactate synthase small subunit.